Consider the following 349-residue polypeptide: UDP-3-O-acylglucosamine N-acyltransferase (349 aa).

His-246 functions as the Proton acceptor in the catalytic mechanism.

This sequence belongs to the transferase hexapeptide repeat family. LpxD subfamily. Homotrimer.

It carries out the reaction a UDP-3-O-[(3R)-3-hydroxyacyl]-alpha-D-glucosamine + a (3R)-hydroxyacyl-[ACP] = a UDP-2-N,3-O-bis[(3R)-3-hydroxyacyl]-alpha-D-glucosamine + holo-[ACP] + H(+). Its pathway is bacterial outer membrane biogenesis; LPS lipid A biosynthesis. Functionally, catalyzes the N-acylation of UDP-3-O-acylglucosamine using 3-hydroxyacyl-ACP as the acyl donor. Is involved in the biosynthesis of lipid A, a phosphorylated glycolipid that anchors the lipopolysaccharide to the outer membrane of the cell. The polypeptide is UDP-3-O-acylglucosamine N-acyltransferase (Trichormus variabilis (strain ATCC 29413 / PCC 7937) (Anabaena variabilis)).